A 954-amino-acid chain; its full sequence is MTDRIELTTANEFIARHIGPRAADEQAMLQTLGFDSIEALSESVIPESIKGTSVLNLPAGQSEADALASIKAIASKNQLFKTYIGQGYYNTHTPAPILRNLLENPAWYTAYTPYQPEISQGRLESLLNFQTLISDLTGLPIANASLLDEATAAAEAMTFCKRLSKNKGSQQFFASSHCHPQTLDVLRTRAEPLGITVVVADEAELGDVSDYFGALLQYPASNGDVFDYRELVERFHAANALVAVAADLLALTLLTPPGEFGADVAIGSAQRFGVPLGFGGPHAAYFSTRDAFKRDMPGRLVGVSVDRHGKQALRLAMQTREQHIRREKATSNICTAQVLLANIASMYAVYHGPRGLTQIAKRVHQLTAILAEGLSTLGLKAEQAFFFDSLTLNTGSRTAALHAAARARHINLREIDDQHLGLSLDETTSQSAVETLWEIFASDGQNLPDFTALAASVPSRLPATLLRQSAILSHPVFNRYHSETELMRYLRKLADKDLALDRTMIPLGSCTMKLNAASEMIPVTWAEFGNLHPFAPAEQSTGYQQLTDELEAMLCAATGYDAISLQPNAGSQGEYAGLLAIRAYHQSRGDEHRDICLIPSSAHGTNPATANMAGMRVVVTACDARGNVDIEDLRAKTVQHRDQLAAIMITYPSTHGVFEEGIREICGIVHDNGGQVYIDGANMNAMVGLCAPGKFGGDVSHLNLHKTFCIPHGGGGPGVGPIGVKSHLAPFMPGHARMERKEGAVCAAPFGSASILPITWMYIRMMGGEGLKRASQLAILNANYISRRLEEHYPVLYTGTNGLVAHECILDLRPIKDSSGISVDDVAKRLIDFGFHAPTMSFPVAGTLMIEPTESESREELDRFCDAMIKIREEIRAVENGTLDKDDNPLKNAPHTAAEIVGQWSHPYSREQAVYPVDSLIENKYWPPVGRVDNVFGDRNLVCACPSIESYQEA.

N6-(pyridoxal phosphate)lysine is present on lysine 706.

The protein belongs to the GcvP family. In terms of assembly, the glycine cleavage system is composed of four proteins: P, T, L and H. Requires pyridoxal 5'-phosphate as cofactor.

The enzyme catalyses N(6)-[(R)-lipoyl]-L-lysyl-[glycine-cleavage complex H protein] + glycine + H(+) = N(6)-[(R)-S(8)-aminomethyldihydrolipoyl]-L-lysyl-[glycine-cleavage complex H protein] + CO2. The glycine cleavage system catalyzes the degradation of glycine. The P protein binds the alpha-amino group of glycine through its pyridoxal phosphate cofactor; CO(2) is released and the remaining methylamine moiety is then transferred to the lipoamide cofactor of the H protein. This is Glycine dehydrogenase (decarboxylating) from Pseudomonas savastanoi pv. phaseolicola (strain 1448A / Race 6) (Pseudomonas syringae pv. phaseolicola (strain 1448A / Race 6)).